A 349-amino-acid chain; its full sequence is MKNIKTMTMEWTGNSLILIDQRYLPIEEKYVECQNYLDVANSIKDMVVRGAPAIGATAAFGFVLGAKEFSYLSDKNLFSNKLEEVKNSLSKTRPTAVNLFWALNRMDKILKDNLPTKEINDLVTILEEEALKIAYEDIEINKQIGKNGEALLNDGDTVLTHCNAGALATVDYGTALGVIRAAVENGKDIQVYADETRPYLQGARLTVWELVKSGIKTTLITDNMAGWVMKQGKINAVIVGADRIARNGDVANKIGTYSVAVLAKRHGIPFYVAAPLSTIDIETKNGEGIPIEERNHNEVRFCHKTRLVTDDVNIYNPAFDVTPNELVTAIITEKMVIRPPYEINIVKLF.

Substrate is bound by residues 49–51 (RGA), arginine 93, and glutamine 201. The active-site Proton donor is aspartate 242. 252–253 (NK) contacts substrate.

It belongs to the EIF-2B alpha/beta/delta subunits family. MtnA subfamily.

The enzyme catalyses 5-(methylsulfanyl)-alpha-D-ribose 1-phosphate = 5-(methylsulfanyl)-D-ribulose 1-phosphate. Its pathway is amino-acid biosynthesis; L-methionine biosynthesis via salvage pathway; L-methionine from S-methyl-5-thio-alpha-D-ribose 1-phosphate: step 1/6. In terms of biological role, catalyzes the interconversion of methylthioribose-1-phosphate (MTR-1-P) into methylthioribulose-1-phosphate (MTRu-1-P). The polypeptide is Methylthioribose-1-phosphate isomerase (Petrotoga mobilis (strain DSM 10674 / SJ95)).